The sequence spans 326 residues: Aldo-keto reductase family 1 member D1 (326 aa).

NADP(+) contacts are provided by residues 22-26 (GLGTY) and aspartate 52. Position 26 (tyrosine 26) interacts with substrate. Tyrosine 57, tryptophan 88, glutamate 119, and tyrosine 131 together coordinate substrate. Tyrosine 57 (proton donor) is an active-site residue. NADP(+)-binding positions include 168-169 (SN), glutamine 192, and 219-224 (YSPLGT). Position 230 (tryptophan 230) interacts with substrate. An NADP(+)-binding site is contributed by 273 to 283 (KSTTPERIKEN).

It belongs to the aldo/keto reductase family. The N-terminus is blocked.

The protein localises to the cytoplasm. It catalyses the reaction 5beta-cholestan-3-one + NADP(+) = cholest-4-en-3-one + NADPH + H(+). It carries out the reaction 4,5beta-dihydrocortisone + NADP(+) = cortisone + NADPH + H(+). The catalysed reaction is cortisol + NADPH + H(+) = 5beta-dihydrocortisol + NADP(+). The enzyme catalyses corticosterone + NADPH + H(+) = 5beta-dihydrocorticosterone + NADP(+). It catalyses the reaction 7alpha,12alpha-dihydroxycholest-4-en-3-one + NADPH + H(+) = 7alpha,12alpha-dihydroxy-5beta-cholestan-3-one + NADP(+). It carries out the reaction 7alpha-hydroxycholest-4-en-3-one + NADPH + H(+) = 7alpha-hydroxy-5beta-cholestan-3-one + NADP(+). The catalysed reaction is epitestosterone + NADPH + H(+) = 5beta-dihydroepitestosterone + NADP(+). The enzyme catalyses androst-4-ene-3,17-dione + NADPH + H(+) = 5beta-androstane-3,17-dione + NADP(+). It catalyses the reaction progesterone + NADPH + H(+) = 5beta-pregnan-3,20-dione + NADP(+). It carries out the reaction 21-hydroxyprogesterone + NADPH + H(+) = 5beta-dihydrodeoxycorticosterone + NADP(+). The catalysed reaction is aldosterone + NADPH + H(+) = 5beta-dihydroaldosterone + NADP(+). The enzyme catalyses 17beta-hydroxyandrosta-1,4-dien-3-one + NADPH + H(+) = 17beta-hydroxy-5beta-androst-1-en-3-one + NADP(+). It catalyses the reaction 17beta-hydroxyestr-4-en-3-one + NADPH + H(+) = 17beta-hydroxy-5beta-estran-3-one + NADP(+). It carries out the reaction 5beta-dihydrotestosterone + NADP(+) = testosterone + NADPH + H(+). The catalysed reaction is androst-4-ene-3,11,17-trione + NADPH + H(+) = 17beta-hydroxyandrost-4-ene-3,11-dione + NADP(+). Subject to inhibition by high substrate concentrations. Inhibited by testosterone concentrations above 10 uM. Inhibited by the primary and secondary bile acids chenodeoxycholic acid and ursodeoxycholic acid. Catalyzes the stereospecific NADPH-dependent reduction of the C4-C5 double bond of bile acid intermediates and steroid hormones carrying a delta(4)-3-one structure to yield an A/B cis-ring junction. This cis-configuration is crucial for bile acid biosynthesis and plays important roles in steroid metabolism. Capable of reducing a broad range of delta-(4)-3-ketosteroids from C18 (such as, 17beta-hydroxyestr-4-en-3-one) to C27 (such as, 7alpha-hydroxycholest-4-en-3-one). In Rattus norvegicus (Rat), this protein is Aldo-keto reductase family 1 member D1 (Akr1d1).